Consider the following 110-residue polypeptide: Nucleoid-associated protein PERMA_0533 (110 aa).

It belongs to the YbaB/EbfC family. In terms of assembly, homodimer.

Its subcellular location is the cytoplasm. The protein localises to the nucleoid. In terms of biological role, binds to DNA and alters its conformation. May be involved in regulation of gene expression, nucleoid organization and DNA protection. The protein is Nucleoid-associated protein PERMA_0533 of Persephonella marina (strain DSM 14350 / EX-H1).